A 77-amino-acid chain; its full sequence is Translation initiation factor IF-1, chloroplastic (77 aa).

The 71-residue stretch at 1–71 (MKEQKWIHEG…TRGRIIYRLR (71 aa)) folds into the S1-like domain.

Belongs to the IF-1 family. In terms of assembly, component of the 30S ribosomal translation pre-initiation complex which assembles on the 30S ribosome in the order IF-2 and IF-3, IF-1 and N-formylmethionyl-tRNA(fMet); mRNA recruitment can occur at any time during PIC assembly.

It localises to the plastid. The protein resides in the chloroplast. Functionally, one of the essential components for the initiation of protein synthesis. Stabilizes the binding of IF-2 and IF-3 on the 30S subunit to which N-formylmethionyl-tRNA(fMet) subsequently binds. Helps modulate mRNA selection, yielding the 30S pre-initiation complex (PIC). Upon addition of the 50S ribosomal subunit IF-1, IF-2 and IF-3 are released leaving the mature 70S translation initiation complex. This is Translation initiation factor IF-1, chloroplastic from Brexia madagascariensis.